The following is a 412-amino-acid chain: Arginine biosynthesis bifunctional protein ArgJ (412 aa).

Residues T158, K184, T195, E284, N407, and S412 each contribute to the substrate site. The active-site Nucleophile is the T195.

This sequence belongs to the ArgJ family. Heterotetramer of two alpha and two beta chains.

It is found in the cytoplasm. It catalyses the reaction N(2)-acetyl-L-ornithine + L-glutamate = N-acetyl-L-glutamate + L-ornithine. It carries out the reaction L-glutamate + acetyl-CoA = N-acetyl-L-glutamate + CoA + H(+). It participates in amino-acid biosynthesis; L-arginine biosynthesis; L-ornithine and N-acetyl-L-glutamate from L-glutamate and N(2)-acetyl-L-ornithine (cyclic): step 1/1. It functions in the pathway amino-acid biosynthesis; L-arginine biosynthesis; N(2)-acetyl-L-ornithine from L-glutamate: step 1/4. In terms of biological role, catalyzes two activities which are involved in the cyclic version of arginine biosynthesis: the synthesis of N-acetylglutamate from glutamate and acetyl-CoA as the acetyl donor, and of ornithine by transacetylation between N(2)-acetylornithine and glutamate. This is Arginine biosynthesis bifunctional protein ArgJ from Bartonella quintana (strain Toulouse) (Rochalimaea quintana).